A 631-amino-acid chain; its full sequence is Phosphomethylpyrimidine synthase (631 aa).

Residues Asn-239, Met-268, Tyr-297, His-333, 353 to 355, 394 to 397, and Glu-433 each bind substrate; these read SRG and DGLR. Residue His-437 participates in Zn(2+) binding. Tyr-460 serves as a coordination point for substrate. His-501 contributes to the Zn(2+) binding site. Residues Cys-581, Cys-584, and Cys-589 each coordinate [4Fe-4S] cluster.

It belongs to the ThiC family. Homodimer. The cofactor is [4Fe-4S] cluster.

It catalyses the reaction 5-amino-1-(5-phospho-beta-D-ribosyl)imidazole + S-adenosyl-L-methionine = 4-amino-2-methyl-5-(phosphooxymethyl)pyrimidine + CO + 5'-deoxyadenosine + formate + L-methionine + 3 H(+). Its pathway is cofactor biosynthesis; thiamine diphosphate biosynthesis. In terms of biological role, catalyzes the synthesis of the hydroxymethylpyrimidine phosphate (HMP-P) moiety of thiamine from aminoimidazole ribotide (AIR) in a radical S-adenosyl-L-methionine (SAM)-dependent reaction. This Escherichia coli O8 (strain IAI1) protein is Phosphomethylpyrimidine synthase.